We begin with the raw amino-acid sequence, 239 residues long: Peptidyl-tRNA hydrolase (239 aa).

Tyr14 lines the tRNA pocket. Residue His19 is the Proton acceptor of the active site. 3 residues coordinate tRNA: Phe64, Asn66, and Asn112. The tract at residues 199-227 is disordered; sequence EKPAQKGRSHIRQARPKAPPAELPSSGPM. Basic residues predominate over residues 203–213; it reads QKGRSHIRQAR.

This sequence belongs to the PTH family. As to quaternary structure, monomer.

Its subcellular location is the cytoplasm. It carries out the reaction an N-acyl-L-alpha-aminoacyl-tRNA + H2O = an N-acyl-L-amino acid + a tRNA + H(+). Functionally, hydrolyzes ribosome-free peptidyl-tRNAs (with 1 or more amino acids incorporated), which drop off the ribosome during protein synthesis, or as a result of ribosome stalling. Its function is as follows. Catalyzes the release of premature peptidyl moieties from peptidyl-tRNA molecules trapped in stalled 50S ribosomal subunits, and thus maintains levels of free tRNAs and 50S ribosomes. This is Peptidyl-tRNA hydrolase from Chelativorans sp. (strain BNC1).